A 319-amino-acid polypeptide reads, in one-letter code: MRKLAVLTSGGDSPGMNAAVRAAVRRAHFHEVQMFGVYHGYEGLMRGDIKEMSLGSVGDIIQRGGTILYSARSEAFKTEAGQQRAVEQLRAHEIEGLIVIGGDGSFRGAQKLTEKGFPTIGVPGTIDNDIPCTDFTIGFDTALNTVVEAIDKIRDTATSHERTYIIEVMGRDAGDLALWAGLAAGAESIMIPEASQDMDDIIERLHAGQRRGKKHSIIIVAEGVGSAASYAEAITKETGWETRVTVLGHIQRGGSPTAMDRMLASRMGAAAVDLLLEGKQDRMVGVQNNQIVDVDFQEALAKKHQLDLSIYQLARTLSI.

Gly11 provides a ligand contact to ATP. 21-25 (RAAVR) serves as a coordination point for ADP. Residues 72 to 73 (RS) and 102 to 105 (GDGS) contribute to the ATP site. Asp103 contributes to the Mg(2+) binding site. Position 125-127 (125-127 (TID)) interacts with substrate. Asp127 serves as the catalytic Proton acceptor. Arg154 serves as a coordination point for ADP. Residues Arg162 and 169–171 (MGR) each bind substrate. Residues 185–187 (GAE), Arg211, and 213–215 (KKH) contribute to the ADP site. Residues Glu222, Arg243, and 249 to 252 (HIQR) each bind substrate.

This sequence belongs to the phosphofructokinase type A (PFKA) family. ATP-dependent PFK group I subfamily. Prokaryotic clade 'B1' sub-subfamily. Homotetramer. Mg(2+) is required as a cofactor.

The protein resides in the cytoplasm. The enzyme catalyses beta-D-fructose 6-phosphate + ATP = beta-D-fructose 1,6-bisphosphate + ADP + H(+). It functions in the pathway carbohydrate degradation; glycolysis; D-glyceraldehyde 3-phosphate and glycerone phosphate from D-glucose: step 3/4. Allosterically activated by ADP and other diphosphonucleosides, and allosterically inhibited by phosphoenolpyruvate. In terms of biological role, catalyzes the phosphorylation of D-fructose 6-phosphate to fructose 1,6-bisphosphate by ATP, the first committing step of glycolysis. This Brevibacillus brevis (strain 47 / JCM 6285 / NBRC 100599) protein is ATP-dependent 6-phosphofructokinase.